The sequence spans 270 residues: Putative tRNA (cytidine(32)/guanosine(34)-2'-O)-methyltransferase (270 aa).

G53, W55, D78, D94, and D119 together coordinate S-adenosyl-L-methionine. Residue K159 is the Proton acceptor of the active site.

The protein belongs to the class I-like SAM-binding methyltransferase superfamily. RNA methyltransferase RlmE family. TRM7 subfamily.

It is found in the cytoplasm. The enzyme catalyses cytidine(32)/guanosine(34) in tRNA + 2 S-adenosyl-L-methionine = 2'-O-methylcytidine(32)/2'-O-methylguanosine(34) in tRNA + 2 S-adenosyl-L-homocysteine + 2 H(+). Functionally, methylates the 2'-O-ribose of nucleotides at positions 32 and 34 of the tRNA anticodon loop of substrate tRNAs. In Dictyostelium discoideum (Social amoeba), this protein is Putative tRNA (cytidine(32)/guanosine(34)-2'-O)-methyltransferase (fsjA).